A 174-amino-acid polypeptide reads, in one-letter code: Xanthine-guanine phosphoribosyltransferase (174 aa).

5-phospho-alpha-D-ribose 1-diphosphate-binding positions include 49–50 (RG) and 108–116 (DDLVDTGAT). A Mg(2+)-binding site is contributed by Asp109. 2 residues coordinate guanine: Asp112 and Ile155. Xanthine is bound by residues Asp112 and Ile155. GMP-binding positions include 112-116 (DTGAT) and 154-155 (WI).

It belongs to the purine/pyrimidine phosphoribosyltransferase family. XGPT subfamily. Homotetramer. Mg(2+) serves as cofactor.

It is found in the cell inner membrane. It catalyses the reaction GMP + diphosphate = guanine + 5-phospho-alpha-D-ribose 1-diphosphate. The enzyme catalyses XMP + diphosphate = xanthine + 5-phospho-alpha-D-ribose 1-diphosphate. The catalysed reaction is IMP + diphosphate = hypoxanthine + 5-phospho-alpha-D-ribose 1-diphosphate. It participates in purine metabolism; GMP biosynthesis via salvage pathway; GMP from guanine: step 1/1. Its pathway is purine metabolism; XMP biosynthesis via salvage pathway; XMP from xanthine: step 1/1. Functionally, purine salvage pathway enzyme that catalyzes the transfer of the ribosyl-5-phosphate group from 5-phospho-alpha-D-ribose 1-diphosphate (PRPP) to the N9 position of the 6-oxopurines guanine and xanthine to form the corresponding ribonucleotides GMP (guanosine 5'-monophosphate) and XMP (xanthosine 5'-monophosphate), with the release of PPi. To a lesser extent, also acts on hypoxanthine. The protein is Xanthine-guanine phosphoribosyltransferase of Rhodopseudomonas palustris (strain BisB18).